We begin with the raw amino-acid sequence, 151 residues long: Proteolipid protein 2 (151 aa).

Residues 19–137 (FSRTKKGILL…DAYITFPLKQ (119 aa)) form the MARVEL domain. A run of 4 helical transmembrane segments spans residues 25–45 (GILL…FSAS), 48–68 (AYSS…VFYM), 85–105 (FFRS…VLVE), and 112–132 (IVAG…AYIT).

It localises to the membrane. In terms of biological role, may play a role in cell differentiation in the intestinal epithelium. This chain is Proteolipid protein 2 (Plp2), found in Rattus norvegicus (Rat).